Reading from the N-terminus, the 1434-residue chain is Pleiotropic drug resistance protein 1 (1434 aa).

Residues 1-22 (MEPANLSNLRGSSLRGSTRGSL) are disordered. One can recognise an ABC transporter 1 domain in the interval 161-434 (LNSLHILSSR…FESMGFKCPQ (274 aa)). 194–201 (GPPSSGKT) contacts ATP. Positions 512–725 (ELLKVCTERE…SVNSILVNEF (214 aa)) constitute an ABC transmembrane type-2 1 domain. Helical transmembrane passes span 530–550 (FVYM…MTLF), 563–583 (GGIY…NGMS), 618–638 (IPVT…VIGF), 649–669 (FLLL…IGAV), 675–695 (VAST…GFVL), 702–722 (SWWI…SILV), and 760–780 (IGVG…SLAL). The tract at residues 793–824 (LPEDGENAENGEVSSQITSTDGGDSISESQNN) is disordered. The span at 804 to 824 (EVSSQITSTDGGDSISESQNN) shows a compositional bias: polar residues. The region spanning 837 to 1089 (ITFDDVVYSV…HLIKYFESNP (253 aa)) is the ABC transporter 2 domain. Residue 882-889 (GVSGAGKT) participates in ATP binding. The 215-residue stretch at 1162 to 1376 (TQCVACLWKQ…TLYGLVASQF (215 aa)) folds into the ABC transmembrane type-2 2 domain. Helical transmembrane passes span 1181–1201 (YTAV…TMFW), 1221–1241 (YAAV…VVAI), 1269–1289 (IPYI…MIGF), 1296–1316 (FFWY…YGMM), 1326–1346 (VASI…GFII), 1357–1377 (WYYW…SQFG), and 1406–1426 (VVAA…AFAI).

It belongs to the ABC transporter superfamily. ABCG family. PDR (TC 3.A.1.205) subfamily.

The protein resides in the membrane. May be a general defense protein. This Nicotiana tabacum (Common tobacco) protein is Pleiotropic drug resistance protein 1 (PDR1).